A 240-amino-acid polypeptide reads, in one-letter code: Probable hydroxyacylglutathione hydrolase (240 aa).

6 residues coordinate Zn(2+): His-33, His-35, Asp-37, His-38, His-95, and Asp-119. Substrate is bound by residues Arg-128, 158–160 (HEY), and 234–237 (REEK). Position 158 (His-158) interacts with Zn(2+).

It belongs to the metallo-beta-lactamase superfamily. Glyoxalase II family. The cofactor is Zn(2+).

It carries out the reaction an S-(2-hydroxyacyl)glutathione + H2O = a 2-hydroxy carboxylate + glutathione + H(+). Its pathway is secondary metabolite metabolism; methylglyoxal degradation; (R)-lactate from methylglyoxal: step 2/2. In terms of biological role, thiolesterase that catalyzes the hydrolysis of S-D-lactoyl-glutathione to form glutathione and D-lactic acid. This Schistosoma mansoni (Blood fluke) protein is Probable hydroxyacylglutathione hydrolase.